Reading from the N-terminus, the 310-residue chain is Putative S-adenosyl-L-methionine-dependent methyltransferase MSMEG_1888/MSMEI_1848 (310 aa).

S-adenosyl-L-methionine-binding positions include Asp128 and 157 to 158 (DL).

Belongs to the UPF0677 family.

Its function is as follows. Exhibits S-adenosyl-L-methionine-dependent methyltransferase activity. The polypeptide is Putative S-adenosyl-L-methionine-dependent methyltransferase MSMEG_1888/MSMEI_1848 (Mycolicibacterium smegmatis (strain ATCC 700084 / mc(2)155) (Mycobacterium smegmatis)).